The sequence spans 572 residues: EF-hand calcium-binding domain-containing protein 12 (572 aa).

Disordered stretches follow at residues 62 to 85 (VPRK…KPIP) and 146 to 169 (EQSA…PRLS). Positions 196–231 (SRKIKILEIFHKVGQGENQRITREEFIAAVKAVGVP) constitute an EF-hand domain. Residue Glu-212 participates in Ca(2+) binding.

The sequence is that of EF-hand calcium-binding domain-containing protein 12 (EFCAB12) from Homo sapiens (Human).